Consider the following 347-residue polypeptide: UDP-3-O-acylglucosamine N-acyltransferase (347 aa).

Histidine 241 functions as the Proton acceptor in the catalytic mechanism.

The protein belongs to the transferase hexapeptide repeat family. LpxD subfamily. As to quaternary structure, homotrimer.

It catalyses the reaction a UDP-3-O-[(3R)-3-hydroxyacyl]-alpha-D-glucosamine + a (3R)-hydroxyacyl-[ACP] = a UDP-2-N,3-O-bis[(3R)-3-hydroxyacyl]-alpha-D-glucosamine + holo-[ACP] + H(+). It participates in bacterial outer membrane biogenesis; LPS lipid A biosynthesis. In terms of biological role, catalyzes the N-acylation of UDP-3-O-acylglucosamine using 3-hydroxyacyl-ACP as the acyl donor. Is involved in the biosynthesis of lipid A, a phosphorylated glycolipid that anchors the lipopolysaccharide to the outer membrane of the cell. The protein is UDP-3-O-acylglucosamine N-acyltransferase of Neisseria gonorrhoeae (strain NCCP11945).